The sequence spans 520 residues: 2-isopropylmalate synthase (520 aa).

The Pyruvate carboxyltransferase domain maps to 12–274 (IRIFDTTLRD…DSAINTPRIV (263 aa)). 4 residues coordinate Mn(2+): D21, H209, H211, and N245. Residues 396–520 (RLASMTISDV…VVAGKTAAVA (125 aa)) are regulatory domain.

Belongs to the alpha-IPM synthase/homocitrate synthase family. LeuA type 1 subfamily. As to quaternary structure, homodimer. Requires Mn(2+) as cofactor.

It localises to the cytoplasm. It carries out the reaction 3-methyl-2-oxobutanoate + acetyl-CoA + H2O = (2S)-2-isopropylmalate + CoA + H(+). Its pathway is amino-acid biosynthesis; L-leucine biosynthesis; L-leucine from 3-methyl-2-oxobutanoate: step 1/4. Functionally, catalyzes the condensation of the acetyl group of acetyl-CoA with 3-methyl-2-oxobutanoate (2-ketoisovalerate) to form 3-carboxy-3-hydroxy-4-methylpentanoate (2-isopropylmalate). The polypeptide is 2-isopropylmalate synthase (Xanthomonas axonopodis pv. citri (strain 306)).